Here is a 308-residue protein sequence, read N- to C-terminus: Aspartate carbamoyltransferase catalytic subunit (308 aa).

The carbamoyl phosphate site is built by Arg59 and Thr60. An L-aspartate-binding site is contributed by Lys87. Carbamoyl phosphate is bound by residues Arg109, His139, and Gln142. Residues Arg172 and Arg224 each contribute to the L-aspartate site. Carbamoyl phosphate-binding residues include Ala265 and Pro266.

It belongs to the aspartate/ornithine carbamoyltransferase superfamily. ATCase family. In terms of assembly, heterododecamer (2C3:3R2) of six catalytic PyrB chains organized as two trimers (C3), and six regulatory PyrI chains organized as three dimers (R2).

It catalyses the reaction carbamoyl phosphate + L-aspartate = N-carbamoyl-L-aspartate + phosphate + H(+). Its pathway is pyrimidine metabolism; UMP biosynthesis via de novo pathway; (S)-dihydroorotate from bicarbonate: step 2/3. Functionally, catalyzes the condensation of carbamoyl phosphate and aspartate to form carbamoyl aspartate and inorganic phosphate, the committed step in the de novo pyrimidine nucleotide biosynthesis pathway. The sequence is that of Aspartate carbamoyltransferase catalytic subunit from Enterococcus faecalis (strain ATCC 700802 / V583).